Here is a 778-residue protein sequence, read N- to C-terminus: Subtilisin-like protease SBT3.6 (778 aa).

A signal peptide spans 1–22; it reads MMNYRTSIYVVLSLVIFLNVQR. The propeptide at 23-113 is activation peptide; it reads SFVAESSAKR…VIPDSFYKLA (91 aa). In terms of domain architecture, Inhibitor I9 spans 34-113; the sequence is VHIVYLGEKQ…VIPDSFYKLA (80 aa). The N-linked (GlcNAc...) asparagine glycan is linked to Asn69. The Peptidase S8 domain maps to 117 to 625; the sequence is TWDYLGLSAA…GGLVNPEKSA (509 aa). Asp147 functions as the Charge relay system in the catalytic mechanism. N-linked (GlcNAc...) asparagine glycosylation is found at Asn158, Asn180, Asn202, and Asn206. His222 functions as the Charge relay system in the catalytic mechanism. N-linked (GlcNAc...) asparagine glycosylation is found at Asn237, Asn399, Asn414, and Asn541. Residues 388 to 483 form the PA domain; it reads SLVYPENPGN…ELGTDILLYT (96 aa). The active-site Charge relay system is Ser556. N-linked (GlcNAc...) asparagine glycans are attached at residues Asn648, Asn724, and Asn759.

It belongs to the peptidase S8 family.

It is found in the secreted. In Arabidopsis thaliana (Mouse-ear cress), this protein is Subtilisin-like protease SBT3.6.